The following is a 594-amino-acid chain: MAKKAADVQKGGGFLIEDVTYDQMYTPEDFTDEHKMIAKTTEDYIEQDVLPHIDDIENHQFEHSVRLLKKAGELGLLGADVPEEYGGLGLDKISSALITEKFSRAGSFSLSYGAHVGIGSLPIVFFGSEEQKKKYLPGLASGEKIAAYALTEPGSGSDALGAKTTAVLNEAGTHYVLTGEKQWITNSAFADVFVVYAKVDGDKFSAFIVEKEFPGVSTGPEEKKMGIKGSSTRTLILDQAEVPKENLLGEIGKGHVIAFNILNIGRYKLAVGTIGASKRVIELSAAYANQRRQFKTPIAGFSLTQEKIGTMASRLYAMESSVYRTVGLFEDNMSQFTAEDLKDGRQIAKSIAEYAIECSLNKVFGSETLDYIVDEGVQIHGGYGFMQEYEVERAYRDSRINRIFEGTNEINRLIVPSTFLKKALKGELPLFEKAQSLQEELMMLMPEEPGSGVLEQEKYIVKQAKKIALFAAGLAAQKYGKAIDREQEILVNVADIVSNVYAMESAVLRTEKAIAAQGAEKAAQKVLYTEIFVQEAFNEIEAHAKESLIAMEEGDSLRMMLSALRKLTRVTPKNVIQKKREAAAGIFEAEKYTV.

The active-site Proton acceptor is Glu405.

Belongs to the acyl-CoA dehydrogenase family. FAD serves as cofactor.

It catalyses the reaction a 2,3-saturated acyl-CoA + A = a 2,3-dehydroacyl-CoA + AH2. Its pathway is lipid metabolism; fatty acid beta-oxidation. Involved in the degradation of long-chain fatty acids. This chain is Probable acyl-CoA dehydrogenase (fadE), found in Bacillus subtilis (strain 168).